A 283-amino-acid polypeptide reads, in one-letter code: Foldase protein PrsA 3 (283 aa).

Residues 1–21 form the signal peptide; sequence MKKKKLFLGTIISCVVLALSA. Cys22 carries the N-palmitoyl cysteine lipid modification. Cys22 carries S-diacylglycerol cysteine lipidation. The PpiC domain maps to 132-222; it reads KPEMKVSHIL…YGYHIIKVTD (91 aa).

Belongs to the PrsA family.

The protein resides in the cell membrane. The catalysed reaction is [protein]-peptidylproline (omega=180) = [protein]-peptidylproline (omega=0). In terms of biological role, plays a major role in protein secretion by helping the post-translocational extracellular folding of several secreted proteins. Important for the secretion of the protective antigen. The three PsrA proteins in this organism show different but overlapping substrate specificities. The chain is Foldase protein PrsA 3 (prsA3) from Bacillus anthracis.